The following is a 146-amino-acid chain: Keratin-associated protein 12-2 (146 aa).

23 repeat units span residues 10 to 14, 15 to 19, 20 to 24, 25 to 29, 34 to 38, 40 to 44, 45 to 49, 55 to 59, 60 to 64, 65 to 69, 70 to 74, 75 to 79, 80 to 84, 85 to 89, 90 to 94, 95 to 99, 100 to 104, 105 to 109, 110 to 114, 120 to 124, 125 to 129, 130 to 134, and 135 to 139. The interval 10–139 is 23 X 5 AA approximate repeats; it reads CQPACCAPSP…CTSVLCRPIS (130 aa).

The protein belongs to the KRTAP type 12 family. As to quaternary structure, interacts with hair keratins. As to expression, restricted to a narrow region of the hair fiber cuticle, lying approximately 20 cell layers above the apex of the dermal papilla of the hair root; not detected in any other tissues.

Its function is as follows. In the hair cortex, hair keratin intermediate filaments are embedded in an interfilamentous matrix, consisting of hair keratin-associated proteins (KRTAP), which are essential for the formation of a rigid and resistant hair shaft through their extensive disulfide bond cross-linking with abundant cysteine residues of hair keratins. The matrix proteins include the high-sulfur and high-glycine-tyrosine keratins. The polypeptide is Keratin-associated protein 12-2 (KRTAP12-2) (Homo sapiens (Human)).